Here is a 93-residue protein sequence, read N- to C-terminus: Large ribosomal subunit protein bL27 (93 aa).

Residues 1-22 (MAHKKAGGSSRNGRDSAGRRLG) form a disordered region.

This sequence belongs to the bacterial ribosomal protein bL27 family.

The protein is Large ribosomal subunit protein bL27 of Parvibaculum lavamentivorans (strain DS-1 / DSM 13023 / NCIMB 13966).